The primary structure comprises 303 residues: 4-diphosphocytidyl-2-C-methyl-D-erythritol kinase (303 aa).

The active site involves Lys-24. Position 111–121 (111–121 (PIASGIGGGSA)) interacts with ATP. Asp-153 is an active-site residue.

This sequence belongs to the GHMP kinase family. IspE subfamily.

It carries out the reaction 4-CDP-2-C-methyl-D-erythritol + ATP = 4-CDP-2-C-methyl-D-erythritol 2-phosphate + ADP + H(+). The protein operates within isoprenoid biosynthesis; isopentenyl diphosphate biosynthesis via DXP pathway; isopentenyl diphosphate from 1-deoxy-D-xylulose 5-phosphate: step 3/6. Catalyzes the phosphorylation of the position 2 hydroxy group of 4-diphosphocytidyl-2C-methyl-D-erythritol. The protein is 4-diphosphocytidyl-2-C-methyl-D-erythritol kinase of Rhizobium johnstonii (strain DSM 114642 / LMG 32736 / 3841) (Rhizobium leguminosarum bv. viciae).